The primary structure comprises 219 residues: Biofilm-associated metzincin protease inhibitor (219 aa).

The helical transmembrane segment at 4–24 (TWIYAASAAAIGGALIGGWLL) threads the bilayer. Positions 191 to 204 (DIAARSDPHGDHVD) are enriched in basic and acidic residues. The tract at residues 191-219 (DIAARSDPHGDHVDAPLAELPPMPPPAQG) is disordered. Over residues 209-219 (ELPPMPPPAQG) the composition is skewed to pro residues.

The protein resides in the cell membrane. Its function is as follows. Inhibitor of the metalloendopeptidase Mep72. Forms a protein-protein complex with the protease, which is the product of its coregulated adjacent gene, and probably prevents premature protease activity until the protein has been secreted. This Pseudomonas aeruginosa (strain ATCC 15692 / DSM 22644 / CIP 104116 / JCM 14847 / LMG 12228 / 1C / PRS 101 / PAO1) protein is Biofilm-associated metzincin protease inhibitor.